The primary structure comprises 209 residues: MSSQYSNVENLSPQTIRQVMRELQEMETTPPEGIKVLINESDVTDIQALIDGPAGTPYAAGIFRVKLTLNKDFPLTPPKAYFLTKIFHPNVAANGEICVNTLKKDWKPDLGIKHILLTIKCLLIVPNPESALNEEAGKMLLERYDDYSQRARMMTEIHAQPAKCGVGATGDAKDDGGPSTKKHAGLDKKLQDKKKEKLLKEKKRMLKRL.

Residues 14–160 (QTIRQVMREL…ARMMTEIHAQ (147 aa)) enclose the UBC core domain. The active-site Glycyl thioester intermediate is Cys98. Positions 165–209 (GVGATGDAKDDGGPSTKKHAGLDKKLQDKKKEKLLKEKKRMLKRL) are disordered. The segment covering 184–199 (AGLDKKLQDKKKEKLL) has biased composition (basic and acidic residues). A compositionally biased stretch (basic residues) spans 200-209 (KEKKRMLKRL).

It belongs to the ubiquitin-conjugating enzyme family.

The catalysed reaction is S-ubiquitinyl-[E1 ubiquitin-activating enzyme]-L-cysteine + [E2 ubiquitin-conjugating enzyme]-L-cysteine = [E1 ubiquitin-activating enzyme]-L-cysteine + S-ubiquitinyl-[E2 ubiquitin-conjugating enzyme]-L-cysteine.. Its pathway is protein modification; protein ubiquitination. Its function is as follows. Catalyzes the covalent attachment of ubiquitin to other proteins. Acts as an essential factor of the anaphase promoting complex/cyclosome (APC/C), a cell cycle-regulated ubiquitin ligase that controls progression through mitosis. Acts by specifically elongating polyubiquitin chains initiated by the E2 enzyme vih/UbcH10 on APC/C substrates, enhancing the degradation of APC/C substrates by the proteasome and promoting mitotic exit. In Drosophila simulans (Fruit fly), this protein is Ubiquitin-conjugating enzyme E2 S.